The sequence spans 120 residues: Chaperonin GroEL (120 aa).

23-27 (DGTTT) contributes to the ATP binding site.

Belongs to the chaperonin (HSP60) family. Forms a cylinder of 14 subunits composed of two heptameric rings stacked back-to-back. Interacts with the co-chaperonin GroES.

The protein localises to the cytoplasm. It carries out the reaction ATP + H2O + a folded polypeptide = ADP + phosphate + an unfolded polypeptide.. Functionally, together with its co-chaperonin GroES, plays an essential role in assisting protein folding. The GroEL-GroES system forms a nano-cage that allows encapsulation of the non-native substrate proteins and provides a physical environment optimized to promote and accelerate protein folding. The polypeptide is Chaperonin GroEL (Mycobacterium scrofulaceum).